Consider the following 428-residue polypeptide: Histidine--tRNA ligase (428 aa).

It belongs to the class-II aminoacyl-tRNA synthetase family. As to quaternary structure, homodimer.

Its subcellular location is the cytoplasm. The catalysed reaction is tRNA(His) + L-histidine + ATP = L-histidyl-tRNA(His) + AMP + diphosphate + H(+). This is Histidine--tRNA ligase from Chromohalobacter salexigens (strain ATCC BAA-138 / DSM 3043 / CIP 106854 / NCIMB 13768 / 1H11).